Reading from the N-terminus, the 313-residue chain is Putative S-adenosyl-L-methionine-dependent methyltransferase MAV_5149 (313 aa).

Residues D135 and 164 to 165 (DL) each bind S-adenosyl-L-methionine.

This sequence belongs to the UPF0677 family.

Functionally, exhibits S-adenosyl-L-methionine-dependent methyltransferase activity. The protein is Putative S-adenosyl-L-methionine-dependent methyltransferase MAV_5149 of Mycobacterium avium (strain 104).